The chain runs to 396 residues: MAKKLFTSESVTEGHPDKICDQISDAILDAIFAKDPNARVACETSVTTGLVLVSGEITTNCYVDIPSTVRQTIREIGYTRAKYGFDADTCAVLTSIGEQSADIALGVDRALEAKNGEMSEEEIEAIGAGDQGMMFGYATNETESYMPLAIDLAHRLARRLSEVRKSDILDYLRPDGKTQVTVEYEDNRPVRIDTIVISTQHHPEATQERIRRDLLEHVVFPVVPSELLDESTRYFINPTGRFVIGGPQGDAGLTGRKIIVDTYGGMARHGGGAFSGKDPTKVDRSAAYAARYVAKNVVAAGLAERCEIQLAYAIGVAQPVSVLVETFGTAKIDEEKIGELVKNNFDLRPAGIIKTLNLRRPIYRQTAAYGHFGRTDLDLPWEKTDKAAALREQAGL.

An ATP-binding site is contributed by H15. D17 serves as a coordination point for Mg(2+). Position 43 (E43) interacts with K(+). Residues E56 and Q99 each contribute to the L-methionine site. The interval Q99–R109 is flexible loop. ATP-binding positions include D175–K177, R241–F242, D250, R256–K257, A273, and K277. An L-methionine-binding site is contributed by D250. Residue K281 coordinates L-methionine.

It belongs to the AdoMet synthase family. As to quaternary structure, homotetramer; dimer of dimers. Mg(2+) serves as cofactor. Requires K(+) as cofactor.

The protein resides in the cytoplasm. The catalysed reaction is L-methionine + ATP + H2O = S-adenosyl-L-methionine + phosphate + diphosphate. Its pathway is amino-acid biosynthesis; S-adenosyl-L-methionine biosynthesis; S-adenosyl-L-methionine from L-methionine: step 1/1. In terms of biological role, catalyzes the formation of S-adenosylmethionine (AdoMet) from methionine and ATP. The overall synthetic reaction is composed of two sequential steps, AdoMet formation and the subsequent tripolyphosphate hydrolysis which occurs prior to release of AdoMet from the enzyme. The chain is S-adenosylmethionine synthase from Desulfitobacterium hafniense (strain DSM 10664 / DCB-2).